A 472-amino-acid chain; its full sequence is Eukaryotic translation initiation factor 2 subunit 3, X-linked (472 aa).

Residue alanine 2 is modified to N-acetylalanine. Serine 16 bears the Phosphoserine mark. The region spanning 39–248 is the tr-type G domain; sequence QATINIGTIG…IVKKIPVPPR (210 aa). Positions 48-55 are G1; the sequence is GHVAHGKS. Residue 51 to 56 participates in GTP binding; that stretch reads AHGKST. Residues 76-80 are G2; that stretch reads NITIK. A G3 region spans residues 134-137; the sequence is DCPG. GTP-binding positions include 190 to 193 and 225 to 227; these read NKID and SAQ. Residues 190-193 form a G4 region; it reads NKID. Positions 225-227 are G5; sequence SAQ. The interval 457–469 is interacts with Cdc123; it reads GQIRRGVTIKPTV.

Belongs to the TRAFAC class translation factor GTPase superfamily. Classic translation factor GTPase family. EIF2G subfamily. Eukaryotic translation initiation factor 2 eIF2 is a heterotrimeric complex composed of an alpha (EIF2S1), a beta (EIF2S2) and a gamma (EIF2S3) chain. eIF2 is member of the 43S pre-initiation complex (43S PIC). Interacts (via C-terminus) with CDC123; the interaction is direct. In terms of tissue distribution, widely expressed. In the brain, high mRNA levels are observed in specific regions, including the habenula, anterodorsal thalamic nucleus, hippocampus, hypothalamus, and cerebellum. Also expressed in the embryonic brain. There is a differential expression between males and females, which is tissue-specific. Females tend to have higher expression levels than males in the brain (cortex, hippocampus and paraventricular nucleus, but not in the habenula), as well as in other tissues. The up-regulation observed in females at the mRNA level may be due to the presence of 2 active copies of the gene.

Its subcellular location is the cytoplasm. It is found in the cytosol. The catalysed reaction is GTP + H2O = GDP + phosphate + H(+). Member of the eIF2 complex that functions in the early steps of protein synthesis by forming a ternary complex with GTP and initiator tRNA. This complex binds to a 40S ribosomal subunit, followed by mRNA binding to form the 43S pre-initiation complex (43S PIC). Junction of the 60S ribosomal subunit to form the 80S initiation complex is preceded by hydrolysis of the GTP bound to eIF2 and release of an eIF2-GDP binary complex. In order for eIF2 to recycle and catalyze another round of initiation, the GDP bound to eIF2 must exchange with GTP by way of a reaction catalyzed by eIF-2B. Along with its paralog on chromosome Y, may contribute to spermatogenesis up to the round spermatid stage. In Mus musculus (Mouse), this protein is Eukaryotic translation initiation factor 2 subunit 3, X-linked (Eif2s3x).